The primary structure comprises 357 residues: Leucoanthocyanidin dioxygenase (357 aa).

The region spanning L212–P311 is the Fe2OG dioxygenase domain. Fe cation is bound by residues H236, D238, and H292.

It belongs to the iron/ascorbate-dependent oxidoreductase family. Requires Fe cation as cofactor. It depends on L-ascorbate as a cofactor.

It carries out the reaction a (2R,3S,4S)-leucoanthocyanidin + 2-oxoglutarate + O2 = a 4-H-anthocyanidin with a 3-hydroxy group + succinate + CO2 + 2 H2O. It participates in pigment biosynthesis; anthocyanin biosynthesis. In terms of biological role, oxidation of leucoanthocyanidins into anthocyanidins. The chain is Leucoanthocyanidin dioxygenase (ANS) from Malus domestica (Apple).